A 176-amino-acid chain; its full sequence is Probable chemoreceptor glutamine deamidase CheD (176 aa).

The protein belongs to the CheD family.

The catalysed reaction is L-glutaminyl-[protein] + H2O = L-glutamyl-[protein] + NH4(+). Probably deamidates glutamine residues to glutamate on methyl-accepting chemotaxis receptors (MCPs), playing an important role in chemotaxis. The protein is Probable chemoreceptor glutamine deamidase CheD of Rhodospirillum rubrum (strain ATCC 11170 / ATH 1.1.1 / DSM 467 / LMG 4362 / NCIMB 8255 / S1).